A 562-amino-acid chain; its full sequence is Oligo-1,6-glucosidase (562 aa).

Ca(2+) is bound by residues aspartate 21, asparagine 23, aspartate 25, and aspartate 29. The active-site Nucleophile is aspartate 199. The active-site Proton donor is the glutamate 256.

It belongs to the glycosyl hydrolase 13 family.

It localises to the cytoplasm. It carries out the reaction Hydrolysis of (1-&gt;6)-alpha-D-glucosidic linkages in some oligosaccharides produced from starch and glycogen by alpha-amylase, and in isomaltose.. This chain is Oligo-1,6-glucosidase (malL), found in Parageobacillus thermoglucosidasius (Geobacillus thermoglucosidasius).